A 369-amino-acid chain; its full sequence is Glutamate 5-kinase (369 aa).

ATP is bound at residue lysine 9. The substrate site is built by serine 49, aspartate 136, and asparagine 148. ATP is bound by residues 168–169 (TD) and 210–216 (TGGMLTK). The region spanning 275-355 (QGSIWVDKGA…KGVLIYRDDW (81 aa)) is the PUA domain.

This sequence belongs to the glutamate 5-kinase family.

It is found in the cytoplasm. The enzyme catalyses L-glutamate + ATP = L-glutamyl 5-phosphate + ADP. The protein operates within amino-acid biosynthesis; L-proline biosynthesis; L-glutamate 5-semialdehyde from L-glutamate: step 1/2. In terms of biological role, catalyzes the transfer of a phosphate group to glutamate to form L-glutamate 5-phosphate. This Streptococcus pneumoniae (strain 70585) protein is Glutamate 5-kinase.